The sequence spans 59 residues: UPF0434 protein Shew_1640 (59 aa).

It belongs to the UPF0434 family.

The protein is UPF0434 protein Shew_1640 of Shewanella loihica (strain ATCC BAA-1088 / PV-4).